A 467-amino-acid chain; its full sequence is MAFINEHFMLNNETGKHLYHDFAKDMPIYDYHCHLDPKQISDNVACDNITDLWLSGDHYKWRAMRAQGIEEQYITGDAAPLDKFKKWTETLENSVGNPLYHWSQLELKMYFDIEDLLTSDNAEAIYHRANDYLKQHHTTTQSLITDSNVNLICTTDNPTDDLNYHDAIKAKDGFNTTVLPAFRPDDVFKVGDPAFTDLLQKLENLTHPITTPSDFIEALYKRIQYFHDKGGRLADHGLEEMHFEAYTDQAIQDIFKKALNHADISTYERFQFQSYMLNELSKAYYERGWVMQIHFGAIRNNNTKMFEKVGKDAGFDSIRDQDNLAYHLNATLDMMEQEGHLPKTILYNLNPIYNDIVGSTIANFQTEPGIKSKVQHGAGWWFNDTKRGMLRQMSSLADQGLLMHFVGMLTDSRSFISYSRHDYFRRILSSFIGDLVEKGEIPNDDQLLKRMIENICYNNAYNYFKLI.

This sequence belongs to the metallo-dependent hydrolases superfamily. Uronate isomerase family.

The catalysed reaction is D-glucuronate = D-fructuronate. It carries out the reaction aldehydo-D-galacturonate = keto-D-tagaturonate. It participates in carbohydrate metabolism; pentose and glucuronate interconversion. The protein is Uronate isomerase of Staphylococcus haemolyticus (strain JCSC1435).